Here is a 94-residue protein sequence, read N- to C-terminus: Large ribosomal subunit protein uL22 (94 aa).

The protein belongs to the universal ribosomal protein uL22 family. As to quaternary structure, part of the 50S ribosomal subunit.

Its function is as follows. This protein binds specifically to 23S rRNA; its binding is stimulated by other ribosomal proteins, e.g. L4, L17, and L20. It is important during the early stages of 50S assembly. It makes multiple contacts with different domains of the 23S rRNA in the assembled 50S subunit and ribosome. Functionally, the globular domain of the protein is located near the polypeptide exit tunnel on the outside of the subunit, while an extended beta-hairpin is found that lines the wall of the exit tunnel in the center of the 70S ribosome. The protein is Large ribosomal subunit protein uL22 (rplV) of Tomato big bud phytoplasma.